Here is a 340-residue protein sequence, read N- to C-terminus: Ferredoxin--NADP reductase (340 aa).

T20, D39, Q47, Y52, V92, F126, D293, and T334 together coordinate FAD.

The protein belongs to the ferredoxin--NADP reductase type 2 family. In terms of assembly, homodimer. Requires FAD as cofactor.

It carries out the reaction 2 reduced [2Fe-2S]-[ferredoxin] + NADP(+) + H(+) = 2 oxidized [2Fe-2S]-[ferredoxin] + NADPH. This chain is Ferredoxin--NADP reductase, found in Gluconobacter oxydans (strain 621H) (Gluconobacter suboxydans).